The sequence spans 245 residues: tRNA1(Val) (adenine(37)-N6)-methyltransferase (245 aa).

It belongs to the methyltransferase superfamily. tRNA (adenine-N(6)-)-methyltransferase family.

Its subcellular location is the cytoplasm. It carries out the reaction adenosine(37) in tRNA1(Val) + S-adenosyl-L-methionine = N(6)-methyladenosine(37) in tRNA1(Val) + S-adenosyl-L-homocysteine + H(+). Functionally, specifically methylates the adenine in position 37 of tRNA(1)(Val) (anticodon cmo5UAC). In Escherichia coli O6:K15:H31 (strain 536 / UPEC), this protein is tRNA1(Val) (adenine(37)-N6)-methyltransferase.